We begin with the raw amino-acid sequence, 423 residues long: Enolase (423 aa).

Residue Gln162 participates in (2R)-2-phosphoglycerate binding. Catalysis depends on Glu204, which acts as the Proton donor. Mg(2+) is bound by residues Asp241, Glu284, and Asp311. Lys336, Arg365, Ser366, and Lys387 together coordinate (2R)-2-phosphoglycerate. The Proton acceptor role is filled by Lys336.

The protein belongs to the enolase family. Mg(2+) is required as a cofactor.

The protein resides in the cytoplasm. It is found in the secreted. It localises to the cell surface. It carries out the reaction (2R)-2-phosphoglycerate = phosphoenolpyruvate + H2O. It participates in carbohydrate degradation; glycolysis; pyruvate from D-glyceraldehyde 3-phosphate: step 4/5. In terms of biological role, catalyzes the reversible conversion of 2-phosphoglycerate (2-PG) into phosphoenolpyruvate (PEP). It is essential for the degradation of carbohydrates via glycolysis. The polypeptide is Enolase (Bartonella bacilliformis (strain ATCC 35685 / KC583 / Herrer 020/F12,63)).